Reading from the N-terminus, the 284-residue chain is 4-diphosphocytidyl-2-C-methyl-D-erythritol kinase (284 aa).

Lys14 is an active-site residue. Position 98–108 (98–108 (PMGGGLGGGSS)) interacts with ATP. Residue Asp140 is part of the active site.

This sequence belongs to the GHMP kinase family. IspE subfamily.

The enzyme catalyses 4-CDP-2-C-methyl-D-erythritol + ATP = 4-CDP-2-C-methyl-D-erythritol 2-phosphate + ADP + H(+). It functions in the pathway isoprenoid biosynthesis; isopentenyl diphosphate biosynthesis via DXP pathway; isopentenyl diphosphate from 1-deoxy-D-xylulose 5-phosphate: step 3/6. Catalyzes the phosphorylation of the position 2 hydroxy group of 4-diphosphocytidyl-2C-methyl-D-erythritol. This is 4-diphosphocytidyl-2-C-methyl-D-erythritol kinase from Shewanella baltica (strain OS155 / ATCC BAA-1091).